The sequence spans 452 residues: Transcription factor AP-2-delta (452 aa).

Position 239 is a phosphoserine; by PKA (serine 239). Residues 280-410 are H-S-H (helix-span-helix), dimerization; sequence RRKAANVTLL…VLSEMLNYLE (131 aa). Residues 416–452 form a disordered region; the sequence is KNGGAADSGQGHANSEKAPLRKASEAAVKEGKTEKTD. A compositionally biased stretch (basic and acidic residues) spans 429 to 452; it reads NSEKAPLRKASEAAVKEGKTEKTD.

Belongs to the AP-2 family. Binds DNA as a dimer. Can form homodimers or heterodimers with other AP-2 family members. As to expression, expressed in both embryonic and newborn brain.

It is found in the nucleus. Functionally, sequence-specific DNA-binding protein that interacts with inducible viral and cellular enhancer elements to regulate transcription of selected genes. AP-2 factors bind to the consensus sequence 5'-GCCNNNGGC-3' and activate genes involved in a large spectrum of important biological functions including proper eye, face, body wall, limb and neural tube development. They also suppress a number of genes including MCAM/MUC18, C/EBP alpha and MYC. The polypeptide is Transcription factor AP-2-delta (Tfap2d) (Mus musculus (Mouse)).